The chain runs to 235 residues: Exotoxin type C (235 aa).

The signal sequence occupies residues 1-27 (MKKINIIKIVFIITVILISTISPIIKS). The Zn(2+) site is built by histidine 194, histidine 228, and aspartate 230.

Belongs to the staphylococcal/streptococcal toxin family.

Superantigen that acts as a causative agent of the symptoms associated with scarlet fever. Has been associated with streptococcal toxic shock-like disease and may play a role in the early events of rheumatic fever. Superantigens cross-link major histocompatibility complex (MHC) class II and T-cell receptor (TCR) molecules, resulting in an overstimulation of T-cells associated with a massive release of pyrogenic and inflammatory cytokines. The protein is Exotoxin type C (speC) of Streptococcus pyogenes serotype M1.